The sequence spans 480 residues: NADH-quinone oxidoreductase subunit N (480 aa).

A run of 13 helical transmembrane segments spans residues 11–31, 38–58, 74–94, 109–129, 163–183, 200–220, 239–259, 273–293, 301–321, 329–349, 372–392, 405–425, and 451–471; these read VIPELFVLGMACAILVIDLFV, ITYGLSQFTLIGAAILTIALA, GLSDLLKVAVYLITAVVFLYS, YVLGLFGVLGMMIMISSYSFL, FILGAIASGMLLYGMSILYGI, GAGLNVPLVFALSFVIVGLAF, PTSVTLFIGTAPKLAGLAIIM, WQGMLTILAVLSLAVGNVVAI, MLAYSTISHVGFILMGILAGT, LFYTLVYAIVAAGGFGMIILL, FAFIMLLIMFSMAGVPPTVGF, VEMIWLAIFAVIFSIVGAFYY, and VVLSINGLLVIVLGIFPGLLM.

This sequence belongs to the complex I subunit 2 family. As to quaternary structure, NDH-1 is composed of 14 different subunits. Subunits NuoA, H, J, K, L, M, N constitute the membrane sector of the complex.

It is found in the cell inner membrane. It carries out the reaction a quinone + NADH + 5 H(+)(in) = a quinol + NAD(+) + 4 H(+)(out). NDH-1 shuttles electrons from NADH, via FMN and iron-sulfur (Fe-S) centers, to quinones in the respiratory chain. The immediate electron acceptor for the enzyme in this species is believed to be ubiquinone. Couples the redox reaction to proton translocation (for every two electrons transferred, four hydrogen ions are translocated across the cytoplasmic membrane), and thus conserves the redox energy in a proton gradient. In Thioalkalivibrio sulfidiphilus (strain HL-EbGR7), this protein is NADH-quinone oxidoreductase subunit N.